We begin with the raw amino-acid sequence, 256 residues long: Uridylate kinase (256 aa).

An ATP-binding site is contributed by 10–13 (KLSG). Gly52 serves as a coordination point for UMP. ATP-binding residues include Gly53 and Arg57. UMP-binding positions include Asp72 and 134-141 (NGQPFLTT). ATP is bound by residues Tyr168 and Asp171.

Belongs to the UMP kinase family. Homohexamer.

Its subcellular location is the cytoplasm. The catalysed reaction is UMP + ATP = UDP + ADP. It participates in pyrimidine metabolism; CTP biosynthesis via de novo pathway; UDP from UMP (UMPK route): step 1/1. Its activity is regulated as follows. Inhibited by UTP. Catalyzes the reversible phosphorylation of UMP to UDP. This Frankia alni (strain DSM 45986 / CECT 9034 / ACN14a) protein is Uridylate kinase.